Reading from the N-terminus, the 207-residue chain is Uridine kinase (207 aa).

13–20 contributes to the ATP binding site; sequence GASGSGKT.

It belongs to the uridine kinase family.

Its subcellular location is the cytoplasm. It catalyses the reaction uridine + ATP = UMP + ADP + H(+). It carries out the reaction cytidine + ATP = CMP + ADP + H(+). Its pathway is pyrimidine metabolism; CTP biosynthesis via salvage pathway; CTP from cytidine: step 1/3. It participates in pyrimidine metabolism; UMP biosynthesis via salvage pathway; UMP from uridine: step 1/1. This is Uridine kinase from Ureaplasma parvum serovar 3 (strain ATCC 27815 / 27 / NCTC 11736).